Consider the following 521-residue polypeptide: Amidase 1 (521 aa).

Active-site charge relay system residues include lysine 112 and serine 187. Residues serine 187 and 208 to 211 contribute to the substrate site; that span reads IGGS. Serine 211 serves as the catalytic Acyl-ester intermediate.

It belongs to the amidase family.

The enzyme catalyses a monocarboxylic acid amide + H2O = a monocarboxylate + NH4(+). The protein operates within xenobiotic degradation. Amidase; part of the Fusarium detoxification of benzoxazolinone cluster 1 (FDB1) involved in the degradation of benzoxazolinones produced by the host plant. Maize, wheat, and rye produce the 2 benzoxazinone phytoanticipins 2,4-dihy-droxy-7-methoxy-1,4-benzoxazin-3-one (DIMBOA) and 2,4-dihydroxy-1,4-benzoxazin-3-one (DIBOA) that, due to their inherent instability once released, spontaneously degrade to the more stable corresponding benzoxazolinones, 6-methoxy-2-benzoxazolinone (MBOA) and 2-benzoxazolinone (BOA), respectively. The first step in the detoxification of benzoxazolinones involves the hydrolysis of the cyclic ester bond of benzoxazolinones by the FDB1 cluster gamma-lactamase MBL1 to aminophenols. MBL1 is able to convert BOA into 2-aminophenol (2-AP), as well as MBOA into 5-methoxy-2-aminophenol (2-AMP). The FDB2 cluster N-malonyltransferase FDB2/NAT1 then metabolizes aminophenols via N-malonylation to non-toxic malonamic acids. FDB2/NAT1 converts 2-AP into N-(2-hydroxyphenyl) malonamic acid (HPMA) and 2-AMP into N-(2-hydroxy-4-methoxyphenyl) malonamic acid (HMPMA). The duplicated dienlactone hydrolases DLH1 and DLH2 may provide redundant function for hydrolyzing the lactone moiety in the BOA molecule. The roles of the amidases an other enzymes encoded by the 2 FDB clusters have not been identified so far. This chain is Amidase 1, found in Gibberella moniliformis (strain M3125 / FGSC 7600) (Maize ear and stalk rot fungus).